A 291-amino-acid polypeptide reads, in one-letter code: ATP synthase gamma chain (291 aa).

This sequence belongs to the ATPase gamma chain family. As to quaternary structure, F-type ATPases have 2 components, CF(1) - the catalytic core - and CF(0) - the membrane proton channel. CF(1) has five subunits: alpha(3), beta(3), gamma(1), delta(1), epsilon(1). CF(0) has three main subunits: a, b and c.

Its subcellular location is the cell membrane. Functionally, produces ATP from ADP in the presence of a proton gradient across the membrane. The gamma chain is believed to be important in regulating ATPase activity and the flow of protons through the CF(0) complex. The sequence is that of ATP synthase gamma chain from Streptococcus equi subsp. equi (strain 4047).